The primary structure comprises 198 residues: Glycerol-3-phosphate acyltransferase (198 aa).

5 consecutive transmembrane segments (helical) span residues 6 to 26, 56 to 78, 83 to 101, 113 to 133, and 154 to 174; these read MLPV…GLIL, LAAA…AGYL, AAML…PVWL, IGIL…VWLA, and IVLW…LTLL.

This sequence belongs to the PlsY family. In terms of assembly, probably interacts with PlsX.

The protein resides in the cell inner membrane. It carries out the reaction an acyl phosphate + sn-glycerol 3-phosphate = a 1-acyl-sn-glycero-3-phosphate + phosphate. Its pathway is lipid metabolism; phospholipid metabolism. Functionally, catalyzes the transfer of an acyl group from acyl-phosphate (acyl-PO(4)) to glycerol-3-phosphate (G3P) to form lysophosphatidic acid (LPA). This enzyme utilizes acyl-phosphate as fatty acyl donor, but not acyl-CoA or acyl-ACP. The protein is Glycerol-3-phosphate acyltransferase of Bradyrhizobium sp. (strain ORS 278).